A 213-amino-acid chain; its full sequence is NADH-quinone oxidoreductase subunit I (213 aa).

4Fe-4S ferredoxin-type domains lie at 74–103 and 113–142; these read RFIE…METS and GNYS…HGIE. [4Fe-4S] cluster is bound by residues C83, C86, C89, C93, C122, C125, C128, and C132.

It belongs to the complex I 23 kDa subunit family. As to quaternary structure, NDH-1 is composed of 14 different subunits. Subunits NuoA, H, J, K, L, M, N constitute the membrane sector of the complex. The cofactor is [4Fe-4S] cluster.

It is found in the cell inner membrane. It carries out the reaction a quinone + NADH + 5 H(+)(in) = a quinol + NAD(+) + 4 H(+)(out). In terms of biological role, NDH-1 shuttles electrons from NADH, via FMN and iron-sulfur (Fe-S) centers, to quinones in the respiratory chain. The immediate electron acceptor for the enzyme in this species is believed to be ubiquinone. Couples the redox reaction to proton translocation (for every two electrons transferred, four hydrogen ions are translocated across the cytoplasmic membrane), and thus conserves the redox energy in a proton gradient. The chain is NADH-quinone oxidoreductase subunit I from Campylobacter jejuni subsp. doylei (strain ATCC BAA-1458 / RM4099 / 269.97).